Consider the following 108-residue polypeptide: UPF0060 membrane protein KPK_2870 (108 aa).

4 helical membrane-spanning segments follow: residues 6–26, 29–49, 61–81, and 86–106; these read LLFF…WLWL, GATP…VWLL, AAYG…VDGV, and YDWA…AGWG.

Belongs to the UPF0060 family.

The protein resides in the cell inner membrane. In Klebsiella pneumoniae (strain 342), this protein is UPF0060 membrane protein KPK_2870.